A 62-amino-acid chain; its full sequence is Potassium channel toxin alpha-KTx 22.1 (62 aa).

Positions Met-1–Ala-18 are cleaved as a signal peptide. Disulfide bonds link Cys-28–Cys-46, Cys-33–Cys-59, and Cys-37–Cys-61.

This sequence belongs to the short scorpion toxin superfamily. Potassium channel inhibitor family. Alpha-KTx 22 subfamily. Expressed by the venom gland.

The protein resides in the secreted. In terms of biological role, may block potassium channels. This is Potassium channel toxin alpha-KTx 22.1 from Olivierus martensii (Manchurian scorpion).